The chain runs to 231 residues: Orotidine 5'-phosphate decarboxylase (231 aa).

Substrate contacts are provided by residues Asp-11, Lys-33, 60 to 69 (DLKFHDIPNT), Thr-119, Arg-180, Gln-189, Gly-209, and Arg-210. Residue Lys-62 is the Proton donor of the active site.

This sequence belongs to the OMP decarboxylase family. Type 1 subfamily. Homodimer.

The enzyme catalyses orotidine 5'-phosphate + H(+) = UMP + CO2. It participates in pyrimidine metabolism; UMP biosynthesis via de novo pathway; UMP from orotate: step 2/2. Its function is as follows. Catalyzes the decarboxylation of orotidine 5'-monophosphate (OMP) to uridine 5'-monophosphate (UMP). This chain is Orotidine 5'-phosphate decarboxylase, found in Idiomarina loihiensis (strain ATCC BAA-735 / DSM 15497 / L2-TR).